A 595-amino-acid polypeptide reads, in one-letter code: MRTHYCSELRNDHVGERVTLCGWVDRRRDHGGVIFLDVRDRTGLIQIVSDPERTPEAYPQADALRNEYVVRIHGEVSRRPDDSLNPRLPTGEVEIYADQIELLNAVHQQLPFQVSTADVESVKEELRLKYRYLDLRRDRMHQNIMMRHRLIQSIRRYLEDQQNFVDIETPVLTRSTPEGARDYLVPSRANPGEWFALPQSPQIFKQLLMVSGFDRYYQIARCFRDEDLRADRQPEFTQLDMEMSFMSQEEIIQLNEDLMRHVFKTLKDIDLPKTFPQMTYAEAMERFGTDRPDTRFDLELVNVSDLLEDSGFKVFSGAIKKGGQVKVLPIPDGNAKISNVRIKPGGDLFSEASAGGAKGLAYIRVKDDGAIDTIGAIKDNLSPEQTAELLERTGAKPGHLLLFGAGPTEIVNASLSRLRLALGAEMKLIDPDQIDLLWITEFPMFEWNADEKRLEALHHPFTAPYPEDEADLKTARAQAYDLVYNGLEIGGGSLRIYQADLQRRVFDAIGLSEEEAQDKFGFLLNAFNFGAPPHGGIAYGIDRLAMLLSGEESIRDTIAFPKTQQARCLLTQAPSSVDQKQLKELQIKSTAEPKN.

E178 lines the L-aspartate pocket. The tract at residues 202-205 (QIFK) is aspartate. R224 is a binding site for L-aspartate. ATP contacts are provided by residues 224–226 (RDE) and Q233. L-aspartate is bound at residue H458. ATP is bound at residue E488. R495 lines the L-aspartate pocket. 540–543 (GIDR) provides a ligand contact to ATP.

It belongs to the class-II aminoacyl-tRNA synthetase family. Type 1 subfamily. As to quaternary structure, homodimer.

It is found in the cytoplasm. It catalyses the reaction tRNA(Asx) + L-aspartate + ATP = L-aspartyl-tRNA(Asx) + AMP + diphosphate. Functionally, aspartyl-tRNA synthetase with relaxed tRNA specificity since it is able to aspartylate not only its cognate tRNA(Asp) but also tRNA(Asn). Reaction proceeds in two steps: L-aspartate is first activated by ATP to form Asp-AMP and then transferred to the acceptor end of tRNA(Asp/Asn). This chain is Aspartate--tRNA(Asp/Asn) ligase, found in Acaryochloris marina (strain MBIC 11017).